Here is a 232-residue protein sequence, read N- to C-terminus: Response regulator MprA (232 aa).

Residues 4–118 (RILVVDDDRA…ELLARMRALL (115 aa)) form the Response regulatory domain. Asp-48 carries the 4-aspartylphosphate modification. Residues 131–229 (SVAMTFSDLS…VRGVGYVLRE (99 aa)) constitute a DNA-binding region (ompR/PhoB-type).

Phosphorylated and dephosphorylated by MprB.

Its subcellular location is the cytoplasm. Functionally, member of the two-component regulatory system MprB/MprA which contributes to maintaining a balance among several systems involved in stress resistance and is required for establishment and maintenance of persistent infection in the host. Functions as a transcriptional regulator that recognizes a 19-bp nucleotide motif comprizing two loosely conserved 8-bp direct DNA-binding motif repeats separated by a 3-bp spacer region. The chain is Response regulator MprA (mprA) from Mycobacterium ulcerans (strain Agy99).